Here is a 563-residue protein sequence, read N- to C-terminus: Nigrin b (563 aa).

Positions 1–25 are cleaved as a signal peptide; sequence MRVVAAAMLYFYIVVLAICSVGIQG. Residue E188 is part of the active site. N221 carries N-linked (GlcNAc...) asparagine glycosylation. Intrachain disulfides connect C274–C302, C319–C338, and C360–C377. 2 Ricin B-type lectin domains span residues 305-431 and 434-559; these read RTSF…WTVT and VKPI…WVTQ. The 1-alpha repeat unit spans residues 316-356; sequence DGLCVDVRNGYDTDGTPLQLWPCGTQRNQRWTFDSDDTIRS. The stretch at 357–397 is one 1-beta repeat; the sequence is MGKCMTANGLNNGSNIVIFNCSTAAENAIKWEVPIDGSIIN. 2 N-linked (GlcNAc...) asparagine glycosylation sites follow: N368 and N376. The 1-gamma repeat unit spans residues 400 to 432; that stretch reads SGLVMTAPRAASRTILLLEDNIYAASQGWTVTN. The stretch at 445–482 is one 2-alpha repeat; it reads KEMCLQSNGENNGVWMEDCEATSLQQQWALYGDRTIRV. Residues C448 and C463 are joined by a disulfide bond. An N-linked (GlcNAc...) asparagine glycan is attached at N483. A 2-beta repeat occupies 486–524; it reads RGLCVTTNGYNSKDLIIILKCQGLPSQRWFFNSDGAIVN. C489 and C506 form a disulfide bridge. Residues 527–554 form a 2-gamma repeat; it reads SRHVMDVRASNVSLREIIIFPATGNPNQ. N537 is a glycosylation site (N-linked (GlcNAc...) asparagine).

In the N-terminal section; belongs to the ribosome-inactivating protein family. Type 2 RIP subfamily. As to quaternary structure, disulfide-linked dimer of A and B chains.

It catalyses the reaction Endohydrolysis of the N-glycosidic bond at one specific adenosine on the 28S rRNA.. In terms of biological role, non-toxic type 2 RIP which strongly inhibits mammalian protein synthesis but does not affect plant nor bacterial protein synthesis. The A chain is responsible for inhibiting protein synthesis through the catalytic inactivation of 60S ribosomal subunits by removing adenine from position 4,324 of 28S rRNA. Its function is as follows. The B chain is a galactose-specific lectin that facilitates the binding of nigrin b to the cell membrane that precedes endocytosis. The chain is Nigrin b from Sambucus nigra (European elder).